Here is a 634-residue protein sequence, read N- to C-terminus: MAKVVGIDLGTTNSCVAVMEGGKPTVIANAEGFRTTPSVVAFAKNQDRLVGQIAKRQAVMNPENTFYSVKRFIGRRPDEVTNELTEVAYKVDTSGNAVKLDSSNAGKQFAPEEISAQVLRKLAEDASKYLGETVTQAVITVPAYFNDSQRQATKDAGKIAGLEVLRIINEPTAAALAYGLDKKSNERILVFDLGGGTFDVSVLEVGDGVFEVLATSGDTHLGGDDFDKKIVDFLAGEFQKNEGIDLRKDKQALQRLTEAAEKAKIELSSATQTEINLPFITATQDGPKHLDLTLTRAKFEELASDLIDRCRIPVEQAIKDAKLALSEIDEIVLVGGSTRIPAVQAIVKQMTGKEPNQSVNPDEVVAIGAAIQGGVLAGEVKDILLLDVTPLSLGVETLGGVMTKLIPRNTTIPTKKSETFSTAADGQTNVEIHVLQGEREMASDNKSLGTFRLDGIPPAPRGVPQIEVIFDIDANGILNVTAKDKGSGKEQSISITGASTLSDNEVDRMVKDAEANAAADKERRERIDLKNQADTLVYQSEKQLSELGDKISADEKSKVEGFIQELKDALAAEDYDKIKSIIEQLQQALYAAGSSVYQQASAEASANAQAGPSSSSSSSSGDDDVIDAEFSESK.

T197 is modified (phosphothreonine; by autocatalysis). Residues 601-620 are compositionally biased toward low complexity; it reads SAEASANAQAGPSSSSSSSS. Residues 601–634 are disordered; sequence SAEASANAQAGPSSSSSSSSGDDDVIDAEFSESK. Residues 621–634 are compositionally biased toward acidic residues; that stretch reads GDDDVIDAEFSESK.

It belongs to the heat shock protein 70 family.

Functionally, acts as a chaperone. This chain is Chaperone protein dnaK2 (dnaK2), found in Synechococcus elongatus (strain ATCC 33912 / PCC 7942 / FACHB-805) (Anacystis nidulans R2).